The primary structure comprises 516 residues: Nucleolar protein 58 (516 aa).

The 121-residue stretch at 283–403 (IAPNLTAMVG…VEGRLSQLEG (121 aa)) folds into the Nop domain. Positions 423–516 (EARAYNADAD…KEKKAKKEKK (94 aa)) are disordered. Low complexity predominate over residues 429 to 444 (ADADSTAAAAAAAPTA). Over residues 445-456 (DSDDEESETEEV) the composition is skewed to acidic residues. Residues 462 to 482 (KKDKKKDKKEKKDKKKDKKRK) show a composition bias toward basic residues. Basic and acidic residues predominate over residues 483–494 (RDDDKEDKESSK). The segment covering 495-516 (KSKKDKKEKKEKKEKKAKKEKK) has biased composition (basic residues).

Belongs to the NOP5/NOP56 family.

The protein localises to the nucleus. The protein resides in the nucleolus. Required for pre-18S rRNA processing. May bind microtubules. The chain is Nucleolar protein 58 (NOP58) from Candida albicans (strain SC5314 / ATCC MYA-2876) (Yeast).